The primary structure comprises 95 residues: Ribonuclease kappa-B (95 aa).

The next 2 helical transmembrane spans lie at G12–I32 and C68–V88.

It belongs to the RNase K family.

It is found in the membrane. Its activity is regulated as follows. Inhibited by Zn(2+) and Hg(2+), while it is unaffected by Ca(2+). Functionally, endoribonuclease which displays activity against poly(C) and poly(U) synthetic substrates, as well as rRNA. The protein is Ribonuclease kappa-B of Ceratitis capitata (Mediterranean fruit fly).